The following is a 190-amino-acid chain: Small ribosomal subunit protein uS5 (190 aa).

The region spanning I19–V82 is the S5 DRBM domain. Positions S161–A190 are disordered. The segment covering K169–P179 has biased composition (basic and acidic residues).

It belongs to the universal ribosomal protein uS5 family. Part of the 30S ribosomal subunit. Contacts proteins S4 and S8.

In terms of biological role, with S4 and S12 plays an important role in translational accuracy. Located at the back of the 30S subunit body where it stabilizes the conformation of the head with respect to the body. In Granulibacter bethesdensis (strain ATCC BAA-1260 / CGDNIH1), this protein is Small ribosomal subunit protein uS5.